We begin with the raw amino-acid sequence, 554 residues long: 3-(3-hydroxy-phenyl)propionate/3-hydroxycinnamic acid hydroxylase (554 aa).

Residues 17 to 46 and 285 to 295 each bind FAD; these read QVAI…VVEK and FRIDRVLLAGD.

It belongs to the PheA/TfdB FAD monooxygenase family. FAD is required as a cofactor.

It carries out the reaction 3-(3-hydroxyphenyl)propanoate + NADH + O2 + H(+) = 3-(2,3-dihydroxyphenyl)propanoate + NAD(+) + H2O. The catalysed reaction is (2E)-3-(3-hydroxyphenyl)prop-2-enoate + NADH + O2 + H(+) = (2E)-3-(2,3-dihydroxyphenyl)prop-2-enoate + NAD(+) + H2O. It functions in the pathway aromatic compound metabolism; 3-phenylpropanoate degradation. In terms of biological role, catalyzes the insertion of one atom of molecular oxygen into position 2 of the phenyl ring of 3-(3-hydroxyphenyl)propionate (3-HPP) and hydroxycinnamic acid (3HCI). This Escherichia coli O157:H7 protein is 3-(3-hydroxy-phenyl)propionate/3-hydroxycinnamic acid hydroxylase.